The sequence spans 235 residues: Succinate dehydrogenase iron-sulfur subunit (235 aa).

Positions 53, 58, and 73 each coordinate [2Fe-2S] cluster. The region spanning 133-163 is the 4Fe-4S ferredoxin-type domain; the sequence is ERAKLDGLYECILCACCSSSCPSYWWNPDKF. Cys143, Cys146, and Cys149 together coordinate [4Fe-4S] cluster. Cys153 is a [3Fe-4S] cluster binding site. Trp158 serves as a coordination point for a ubiquinone. Positions 200 and 206 each coordinate [3Fe-4S] cluster. Cys210 lines the [4Fe-4S] cluster pocket.

Belongs to the succinate dehydrogenase/fumarate reductase iron-sulfur protein family. In terms of assembly, part of an enzyme complex containing four subunits: a flavoprotein, an iron-sulfur protein, cytochrome b-556 and a hydrophobic protein. [2Fe-2S] cluster is required as a cofactor. [3Fe-4S] cluster serves as cofactor. Requires [4Fe-4S] cluster as cofactor.

It catalyses the reaction a quinone + succinate = fumarate + a quinol. The protein operates within carbohydrate metabolism; tricarboxylic acid cycle; fumarate from succinate (bacterial route): step 1/1. The sequence is that of Succinate dehydrogenase iron-sulfur subunit (sdhB) from Coxiella burnetii (strain RSA 493 / Nine Mile phase I).